We begin with the raw amino-acid sequence, 556 residues long: 2-succinyl-5-enolpyruvyl-6-hydroxy-3-cyclohexene-1-carboxylate synthase (556 aa).

This sequence belongs to the TPP enzyme family. MenD subfamily. As to quaternary structure, homodimer. Mg(2+) is required as a cofactor. It depends on Mn(2+) as a cofactor. Thiamine diphosphate serves as cofactor.

It catalyses the reaction isochorismate + 2-oxoglutarate + H(+) = 5-enolpyruvoyl-6-hydroxy-2-succinyl-cyclohex-3-ene-1-carboxylate + CO2. Its pathway is quinol/quinone metabolism; 1,4-dihydroxy-2-naphthoate biosynthesis; 1,4-dihydroxy-2-naphthoate from chorismate: step 2/7. It functions in the pathway quinol/quinone metabolism; menaquinone biosynthesis. In terms of biological role, catalyzes the thiamine diphosphate-dependent decarboxylation of 2-oxoglutarate and the subsequent addition of the resulting succinic semialdehyde-thiamine pyrophosphate anion to isochorismate to yield 2-succinyl-5-enolpyruvyl-6-hydroxy-3-cyclohexene-1-carboxylate (SEPHCHC). This is 2-succinyl-5-enolpyruvyl-6-hydroxy-3-cyclohexene-1-carboxylate synthase from Shigella boydii serotype 4 (strain Sb227).